The chain runs to 264 residues: Glutamate racemase (264 aa).

Substrate is bound by residues 10–11 (DS) and 42–43 (YG). The active-site Proton donor/acceptor is cysteine 73. 74-75 (NT) contributes to the substrate binding site. The active-site Proton donor/acceptor is the cysteine 183. 184 to 185 (TH) provides a ligand contact to substrate.

This sequence belongs to the aspartate/glutamate racemases family.

It catalyses the reaction L-glutamate = D-glutamate. The protein operates within cell wall biogenesis; peptidoglycan biosynthesis. In terms of biological role, provides the (R)-glutamate required for cell wall biosynthesis. The protein is Glutamate racemase of Streptococcus gordonii (strain Challis / ATCC 35105 / BCRC 15272 / CH1 / DL1 / V288).